The sequence spans 571 residues: Putative F-box protein At5g39460 (571 aa).

Residues 9-55 (ACLLLTLPEDVFAVISRFLSPSDICNLILCGKSLCALVDSEKTWLVQ) form the F-box domain.

The sequence is that of Putative F-box protein At5g39460 from Arabidopsis thaliana (Mouse-ear cress).